The primary structure comprises 195 residues: Cysteine/O-acetylserine efflux protein (195 aa).

Topologically, residues 1-7 (MTPTLLS) are periplasmic. The helical transmembrane segment at 8 to 28 (AFWTYTLITAMTPGPNNILAL) threads the bilayer. The Cytoplasmic portion of the chain corresponds to 29–46 (SSATTHGFHQSTRVLAGM). A helical membrane pass occupies residues 47–67 (SLGFLIVMLLCAGISFSLAVI). At 68–69 (DP) the chain is on the periplasmic side. A helical membrane pass occupies residues 70–90 (AAVHLLSWAGAAYIVWLAWKI). Over 91-104 (ATSPTKEDGLQTKP) the chain is Cytoplasmic. Residues 105-125 (ISFWASFALQFVNVKIILYGV) form a helical membrane-spanning segment. Residues 126 to 141 (TALSTFVLPQTQALSW) lie on the Periplasmic side of the membrane. A helical membrane pass occupies residues 142-162 (IVGVSVLLAMIGTFGNVCWAL). The Cytoplasmic portion of the chain corresponds to 163-176 (AGHLFQRLFRQYGR). Residues 177–194 (QLNIVLALLLIYCAVRIF) traverse the membrane as a helical segment. Position 195 (Tyr195) is a topological domain, periplasmic.

It belongs to the Rht family.

It is found in the cell inner membrane. The catalysed reaction is O-acetyl-L-serine(in) = O-acetyl-L-serine(out). It catalyses the reaction L-cysteine(in) = L-cysteine(out). Exporter of O-acetylserine (OAS) and cysteine. This chain is Cysteine/O-acetylserine efflux protein (eamB), found in Escherichia coli O157:H7.